Here is a 1179-residue protein sequence, read N- to C-terminus: Probable manganese-transporting ATPase PDR2 (1179 aa).

Residues 1–20 lie on the Cytoplasmic side of the membrane; the sequence is MSSFRVGGKVVEKVDLCRKK. A helical transmembrane segment spans residues 21 to 42; sequence QLVWRLDVWPFAILYTVWLTTI. At 43–50 the chain is on the lumenal side; it reads VPSIDFSD. Residues 51–71 traverse the membrane as a helical segment; it reads ACIALGGLSAFHILVLLFTTW. At 72–192 the chain is on the cytoplasmic side; it reads SVDFKCFVQF…FDYPQPTFQK (121 aa). A helical transmembrane segment spans residues 193–215; sequence LMKENCMEPFFVFQVFCVGLWCL. Residues 216–218 are Lumenal-facing; that stretch reads DEF. The chain crosses the membrane as a helical span at residues 219-238; the sequence is WYYSVFTLFMLFMFESTMAK. The Cytoplasmic portion of the chain corresponds to 239 to 402; that stretch reads SRLKTLTDLR…ERVTANSWES (164 aa). Residues 403–422 traverse the membrane as a helical segment; that stretch reads GLFILFLVVFAVIAAGYVLV. The Lumenal segment spans residues 423–435; it reads KGLEDPTRSKYKL. The chain crosses the membrane as a helical span at residues 436 to 453; that stretch reads LLGCSLIITSVIPPELPM. Topologically, residues 454–947 are cytoplasmic; it reads ELSIAVNTSL…RQGRSTLVTT (494 aa). Aspartate 491 acts as the 4-aspartylphosphate intermediate in catalysis. The Mg(2+) site is built by aspartate 812 and aspartate 816. Residues 833 to 880 are disordered; the sequence is KLPLSPSDSSKDDKSKSKKSKLPLEPASKTITQNGEGSSKGKIPPQNR. Residues 948-967 traverse the membrane as a helical segment; the sequence is LQMFKILGLNCLATAYVLSV. Residues 968-979 are Lumenal-facing; that stretch reads MYLDGVKLGDVQ. A helical transmembrane segment spans residues 980–997; that stretch reads ATISGVLTAAFFLFISHA. Residues 998 to 1013 lie on the Cytoplasmic side of the membrane; the sequence is RPLQTLSAERPHPSVF. A helical membrane pass occupies residues 1014–1034; the sequence is SVYLFLSLIGQFAVHLTFLVY. Residues 1035–1059 lie on the Lumenal side of the membrane; the sequence is SVKEAEKHMPEECIEPDASFHPNLV. A helical transmembrane segment spans residues 1060–1079; it reads NTVSYMVSMMLQVATFAVNY. Residues 1080–1092 are Cytoplasmic-facing; sequence MGHPFNQSIRENK. The chain crosses the membrane as a helical span at residues 1093-1110; it reads PFFYALIAGAGFFTVIAS. Residues 1111 to 1128 are Lumenal-facing; it reads DLFRDLNDSLKLVPLPQG. The chain crosses the membrane as a helical span at residues 1129 to 1148; the sequence is LRDKLLIWASLMFIICYSWE. The Cytoplasmic portion of the chain corresponds to 1149 to 1179; the sequence is RLLRWAFPGKISSWKHKQRAVTANLEKKKKV.

The protein belongs to the cation transport ATPase (P-type) (TC 3.A.3) family. Type V subfamily. Highly expressed in root meristem. Expressed in pavement cells of trichomes, stipules, stamens and pollen grains.

Its subcellular location is the endoplasmic reticulum membrane. It catalyses the reaction ATP + H2O = ADP + phosphate + H(+). In terms of biological role, mediates manganese transport into the endoplasmic reticulum. The ATPase activity is required for cellular manganese homeostasis. Plays an important role in pollen and root development through its impact on protein secretion and transport processes. Functions together with LPR1 and LPR2 in a common pathway that adjusts root meristem activity to phosphate availability. Under phosphate limitation, restricts SHR movement in root meristem and is required for maintaining SCR expression in the root meristem stem-cell niche as well as for proximal meristem activity. Can complement the yeast spf1 mutant. The chain is Probable manganese-transporting ATPase PDR2 (PDR2) from Arabidopsis thaliana (Mouse-ear cress).